A 264-amino-acid chain; its full sequence is NAD-capped RNA hydrolase NudC (264 aa).

Arginine 70 is a substrate binding site. 2 residues coordinate Zn(2+): cysteine 99 and cysteine 102. Residue glutamate 112 coordinates substrate. Residues cysteine 117 and cysteine 122 each coordinate Zn(2+). Tyrosine 127 serves as a coordination point for substrate. One can recognise a Nudix hydrolase domain in the interval 128-257; sequence PVICPSIIVA…TIALKLINAT (130 aa). Residues alanine 166, glutamate 182, and glutamate 186 each coordinate a divalent metal cation. Positions 167–188 match the Nudix box motif; sequence GFVEIGESFEQTVEREVFEETG. 200–207 provides a ligand contact to substrate; that stretch reads QPWAFPNS. Glutamate 227 provides a ligand contact to a divalent metal cation. Alanine 250 provides a ligand contact to substrate.

This sequence belongs to the Nudix hydrolase family. NudC subfamily. Homodimer. It depends on Mg(2+) as a cofactor. The cofactor is Mn(2+). Zn(2+) serves as cofactor.

It carries out the reaction a 5'-end NAD(+)-phospho-ribonucleoside in mRNA + H2O = a 5'-end phospho-adenosine-phospho-ribonucleoside in mRNA + beta-nicotinamide D-ribonucleotide + 2 H(+). It catalyses the reaction NAD(+) + H2O = beta-nicotinamide D-ribonucleotide + AMP + 2 H(+). The catalysed reaction is NADH + H2O = reduced beta-nicotinamide D-ribonucleotide + AMP + 2 H(+). Functionally, mRNA decapping enzyme that specifically removes the nicotinamide adenine dinucleotide (NAD) cap from a subset of mRNAs by hydrolyzing the diphosphate linkage to produce nicotinamide mononucleotide (NMN) and 5' monophosphate mRNA. The NAD-cap is present at the 5'-end of some mRNAs and stabilizes RNA against 5'-processing. Has preference for mRNAs with a 5'-end purine. Catalyzes the hydrolysis of a broad range of dinucleotide pyrophosphates. The polypeptide is NAD-capped RNA hydrolase NudC (Actinobacillus succinogenes (strain ATCC 55618 / DSM 22257 / CCUG 43843 / 130Z)).